Reading from the N-terminus, the 266-residue chain is Thymidylate synthase (266 aa).

R24 is a dUMP binding site. H54 contacts (6R)-5,10-methylene-5,6,7,8-tetrahydrofolate. Position 129-130 (129-130) interacts with dUMP; the sequence is RR. C149 serves as the catalytic Nucleophile. DUMP-binding positions include 169–172, N180, and 210–212; these read RSAD and HIY. Residue D172 coordinates (6R)-5,10-methylene-5,6,7,8-tetrahydrofolate. A265 is a binding site for (6R)-5,10-methylene-5,6,7,8-tetrahydrofolate.

Belongs to the thymidylate synthase family. Bacterial-type ThyA subfamily. Homodimer.

The protein localises to the cytoplasm. The enzyme catalyses dUMP + (6R)-5,10-methylene-5,6,7,8-tetrahydrofolate = 7,8-dihydrofolate + dTMP. It participates in pyrimidine metabolism; dTTP biosynthesis. Functionally, catalyzes the reductive methylation of 2'-deoxyuridine-5'-monophosphate (dUMP) to 2'-deoxythymidine-5'-monophosphate (dTMP) while utilizing 5,10-methylenetetrahydrofolate (mTHF) as the methyl donor and reductant in the reaction, yielding dihydrofolate (DHF) as a by-product. This enzymatic reaction provides an intracellular de novo source of dTMP, an essential precursor for DNA biosynthesis. The sequence is that of Thymidylate synthase from Mycolicibacterium paratuberculosis (strain ATCC BAA-968 / K-10) (Mycobacterium paratuberculosis).